Reading from the N-terminus, the 212-residue chain is F-box protein GID2 (212 aa).

The interval 1 to 74 (MKFRSDSSGG…AGEGEQPRVP (74 aa)) is disordered. A compositionally biased stretch (low complexity) spans 35-59 (DPSSSSSQGEASSSSQPPPQQQQEE). Residues 70 to 116 (QPRVPDLGEDLVFEVLRRAEARTLAAAACVSRGWRQLAEDERLWEAA) form the F-box domain.

Part of some SCF(GID2) complex, which consist of a SKP1 protein, CUL1, GID2 and some RING box protein. Interacts directly with SKP2 and SKP15. Interacts directly with DELLA protein SLR1. May have a higher affinity for phosphorylated SLR1 proteins. In terms of tissue distribution, widely expressed. Preferentially expressed in unopened flowers, shoot apices and elongation stem. Expressed at lower level in the leaf blades, leaf sheaths, roots and rachis.

It is found in the nucleus. The protein operates within protein modification; protein ubiquitination. In terms of biological role, essential component of some SCF-type E3 ligase complex that positively regulates the gibberellin signaling pathway. Upon gibberellin treatment, the complex mediates the ubiquitination and subsequent degradation of DELLA protein SLR1, a repressor of the gibberellin pathway, leading to activate the pathway. The sequence is that of F-box protein GID2 (GID2) from Oryza sativa subsp. japonica (Rice).